The sequence spans 313 residues: Recombination-promoting nuclease pSLT051 (313 aa).

Belongs to the Rpn/YhgA-like nuclease family.

Functionally, a low activity DNA endonuclease probably yielding 3'-hydroxyl ends. Involved in RecA-independent recombination and horizontal gene transfer. The polypeptide is Recombination-promoting nuclease pSLT051 (Salmonella typhimurium (strain LT2 / SGSC1412 / ATCC 700720)).